The following is an 81-amino-acid chain: Photosystem I iron-sulfur center (81 aa).

4Fe-4S ferredoxin-type domains follow at residues 1–31 (MSHK…MVPW) and 39–68 (IASS…IRVY). The [4Fe-4S] cluster site is built by Cys11, Cys14, Cys17, Cys21, Cys48, Cys51, Cys54, and Cys58.

As to quaternary structure, the cyanobacterial PSI reaction center is composed of one copy each of PsaA,B,C,D,E,F,I,J,K,L,M and X, and forms trimeric complexes. Requires [4Fe-4S] cluster as cofactor.

The protein resides in the cellular thylakoid membrane. The enzyme catalyses reduced [plastocyanin] + hnu + oxidized [2Fe-2S]-[ferredoxin] = oxidized [plastocyanin] + reduced [2Fe-2S]-[ferredoxin]. Its function is as follows. Apoprotein for the two 4Fe-4S centers FA and FB of photosystem I (PSI); essential for photochemical activity. FB is the terminal electron acceptor of PSI, donating electrons to ferredoxin. The C-terminus interacts with PsaA/B/D and helps assemble the protein into the PSI complex. Required for binding of PsaD and PsaE to PSI. PSI is a plastocyanin/cytochrome c6-ferredoxin oxidoreductase, converting photonic excitation into a charge separation, which transfers an electron from the donor P700 chlorophyll pair to the spectroscopically characterized acceptors A0, A1, FX, FA and FB in turn. In Rippkaea orientalis (strain PCC 8801 / RF-1) (Cyanothece sp. (strain PCC 8801)), this protein is Photosystem I iron-sulfur center.